Here is a 96-residue protein sequence, read N- to C-terminus: Putative pterin-4-alpha-carbinolamine dehydratase (96 aa).

Belongs to the pterin-4-alpha-carbinolamine dehydratase family.

It catalyses the reaction (4aS,6R)-4a-hydroxy-L-erythro-5,6,7,8-tetrahydrobiopterin = (6R)-L-erythro-6,7-dihydrobiopterin + H2O. This chain is Putative pterin-4-alpha-carbinolamine dehydratase, found in Prochlorococcus marinus (strain MIT 9301).